The chain runs to 216 residues: uncharacterized protein (216 aa).

One can recognise an N-acetyltransferase domain in the interval 1–216 (MVVKIVEAYE…DVTFLKLKLK (216 aa)).

This sequence belongs to the acetyltransferase family.

This is an uncharacterized protein from Dictyostelium discoideum (Social amoeba).